The sequence spans 371 residues: 4-hydroxy-3-methylbut-2-en-1-yl diphosphate synthase (flavodoxin) (371 aa).

[4Fe-4S] cluster is bound by residues cysteine 270, cysteine 273, cysteine 305, and glutamate 312.

It belongs to the IspG family. [4Fe-4S] cluster is required as a cofactor.

The catalysed reaction is (2E)-4-hydroxy-3-methylbut-2-enyl diphosphate + oxidized [flavodoxin] + H2O + 2 H(+) = 2-C-methyl-D-erythritol 2,4-cyclic diphosphate + reduced [flavodoxin]. It participates in isoprenoid biosynthesis; isopentenyl diphosphate biosynthesis via DXP pathway; isopentenyl diphosphate from 1-deoxy-D-xylulose 5-phosphate: step 5/6. Its function is as follows. Converts 2C-methyl-D-erythritol 2,4-cyclodiphosphate (ME-2,4cPP) into 1-hydroxy-2-methyl-2-(E)-butenyl 4-diphosphate. This is 4-hydroxy-3-methylbut-2-en-1-yl diphosphate synthase (flavodoxin) from Chromohalobacter salexigens (strain ATCC BAA-138 / DSM 3043 / CIP 106854 / NCIMB 13768 / 1H11).